The following is a 559-amino-acid chain: 2,3-bisphosphoglycerate-independent phosphoglycerate mutase (559 aa).

Mn(2+)-binding residues include D28 and S81. Residue S81 is the Phosphoserine intermediate of the active site. Residues H140, 170–171 (RD), R206, R213, 286–289 (RADR), and K361 contribute to the substrate site. Mn(2+) is bound by residues D430, H434, D471, H472, and H501.

Belongs to the BPG-independent phosphoglycerate mutase family. Monomer. Mn(2+) serves as cofactor. In terms of tissue distribution, found ubiquitously in germinating seed.

It localises to the cytoplasm. The catalysed reaction is (2R)-2-phosphoglycerate = (2R)-3-phosphoglycerate. Its pathway is carbohydrate degradation; glycolysis; pyruvate from D-glyceraldehyde 3-phosphate: step 3/5. Functionally, catalyzes the interconversion of 2-phosphoglycerate and 3-phosphoglycerate. This is 2,3-bisphosphoglycerate-independent phosphoglycerate mutase from Nicotiana tabacum (Common tobacco).